Here is a 232-residue protein sequence, read N- to C-terminus: Ribonuclease 3 (232 aa).

The RNase III domain occupies 2-135; that stretch reads IKALEDDLSQ…FIGALYLDQG (134 aa). Glu-48 lines the Mg(2+) pocket. Asp-52 is an active-site residue. Mg(2+) is bound by residues Asp-121 and Glu-124. Residue Glu-124 is part of the active site. The DRBM domain maps to 161–230; the sequence is DHKSELQELL…ANQALQLLRR (70 aa).

The protein belongs to the ribonuclease III family. In terms of assembly, homodimer. Mg(2+) is required as a cofactor.

It is found in the cytoplasm. The catalysed reaction is Endonucleolytic cleavage to 5'-phosphomonoester.. Functionally, digests double-stranded RNA. Involved in the processing of primary rRNA transcript to yield the immediate precursors to the large and small rRNAs (23S and 16S). Processes some mRNAs, and tRNAs when they are encoded in the rRNA operon. Processes pre-crRNA and tracrRNA of type II CRISPR loci if present in the organism. The protein is Ribonuclease 3 of Pediococcus pentosaceus (strain ATCC 25745 / CCUG 21536 / LMG 10740 / 183-1w).